The sequence spans 526 residues: MQSESGIVPDFEVGEEFHEEPKTYYELKSQPLKSSSSAEHPGASKPPISSSSMTSRILLRQQLMREQMQEQERREQQQKLQAAQFMQQRVPVSQTPAINVSVPTTLPSATQVPMEVLKVQTHLENPTKYHIQQAQRQQVKQYLSTTLANKHANQVLSLPCPNQPGDHVMPPVPGSSAPNSPMAMLTLNSNCEKEGFYKFEEQNRAESECPGMNTHSRASCMQMDDVIDDIISLESSYNEEILGLMDPALQMANTLPVSGNLIDLYGNQGLPPPGLTISNSCPANLPNIKRELTACIFPTESEARALAKERQKKDNHNLIERRRRFNINDRIKELGTLIPKSNDPDMRWNKGTILKASVDYIRKLQREQQRAKELENRQKKLEHANRHLLLRIQELEMQARAHGLSLIPSTGLCSPDLVNRIIKQEPVLENCSQDLLQHHADLTCTTTLDLTDGTITFNNNLGTGTEANQAYSVPTKMGSKLEDILMDDTLSPVGVTDPLLSSVSPGASKTSSRRSSMSMEETEHTC.

Residues 1-54 form a disordered region; it reads MQSESGIVPDFEVGEEFHEEPKTYYELKSQPLKSSSSAEHPGASKPPISSSSMT. S5 is subject to Phosphoserine; by MTOR. Residues 15–25 are compositionally biased toward basic and acidic residues; sequence EEFHEEPKTYY. Positions 41–54 are enriched in low complexity; it reads PGASKPPISSSSMT. S180 is modified (phosphoserine; by MAPK). Residues 224-295 form a transactivation region; the sequence is DDVIDDIISL…PNIKRELTAC (72 aa). S280 carries the phosphoserine; by MARK3 modification. K289 participates in a covalent cross-link: Glycyl lysine isopeptide (Lys-Gly) (interchain with G-Cter in SUMO). One can recognise a bHLH domain in the interval 311-364; it reads QKKDNHNLIERRRRFNINDRIKELGTLIPKSNDPDMRWNKGTILKASVDYIRKL. Residues 355 to 402 adopt a coiled-coil conformation; sequence KASVDYIRKLQREQQRAKELENRQKKLEHANRHLLLRIQELEMQARAH. Positions 374–395 are leucine-zipper; sequence LENRQKKLEHANRHLLLRIQEL. The tract at residues 401 to 431 is DNA-binding regulation; sequence AHGLSLIPSTGLCSPDLVNRIIKQEPVLENC. Residue S405 is modified to Phosphoserine; by GSK3. The residue at position 414 (S414) is a Phosphoserine. K423 is covalently cross-linked (Glycyl lysine isopeptide (Lys-Gly) (interchain with G-Cter in SUMO)). At S491 the chain carries Phosphoserine. The interval 496–526 is disordered; the sequence is TDPLLSSVSPGASKTSSRRSSMSMEETEHTC. Positions 499–509 are enriched in polar residues; the sequence is LLSSVSPGASK. S516 carries the phosphoserine; by RPS6KA1 modification.

Belongs to the MiT/TFE family. Homodimer or heterodimer; dimerization is mediated via the coiled coil region. Efficient DNA binding requires dimerization with another bHLH protein. Binds DNA in the form of homodimer or heterodimer with either TFE3, TFEB or TFEC. Interacts with small GTPases Rag (RagA/RRAGA, RagB/RRAGB, RagC/RRAGC and/or RagD/RRAGD); promoting its recruitment to lysosomal membrane in the presence of nutrients. Interacts with KARS1. Identified in a complex with HINT1 and CTNNB1. Interacts with VSX2. When nutrients are present, phosphorylation by MTOR at Ser-5 via non-canonical mTORC1 pathway promotes ubiquitination by the SCF(BTRC) complex, followed by degradation. Phosphorylation at Ser-405 significantly enhances the ability to bind the tyrosinase promoter. Phosphorylation by MARK3/cTAK1 at Ser-280 promotes association with 14-3-3/YWHA adapters and retention in the cytosol. Phosphorylated at Ser-180 and Ser-516 following KIT signaling, triggering a short live activation: Phosphorylation at Ser-180 and Ser-516 by MAPK and RPS6KA1, respectively, activate the transcription factor activity but also promote ubiquitination and subsequent degradation by the proteasome. Phosphorylated in response to blue light (415nm). Post-translationally, ubiquitinated by the SCF(BTRC) and SCF(FBXW11) complexes following phosphorylation ar Ser-5 by MTOR, leading to its degradation by the proteasome. Ubiquitinated following phosphorylation at Ser-180, leading to subsequent degradation by the proteasome. Deubiquitinated by USP13, preventing its degradation. In terms of tissue distribution, expressed in melanocytes (at protein level). As to expression, expressed in the retinal pigment epithelium, brain, and placenta. Expressed in the kidney. Expressed in the kidney and retinal pigment epithelium. In terms of tissue distribution, expressed in the kidney. As to expression, expressed in melanocytes.

It is found in the nucleus. Its subcellular location is the cytoplasm. The protein resides in the lysosome membrane. Transcription factor that acts as a master regulator of melanocyte survival and differentiation as well as melanosome biogenesis. Binds to M-boxes (5'-TCATGTG-3') and symmetrical DNA sequences (E-boxes) (5'-CACGTG-3') found in the promoter of pigmentation genes, such as tyrosinase (TYR). Involved in the cellular response to amino acid availability by acting downstream of MTOR: in the presence of nutrients, MITF phosphorylation by MTOR promotes its inactivation. Upon starvation or lysosomal stress, inhibition of MTOR induces MITF dephosphorylation, resulting in transcription factor activity. Plays an important role in melanocyte development by regulating the expression of tyrosinase (TYR) and tyrosinase-related protein 1 (TYRP1). Plays a critical role in the differentiation of various cell types, such as neural crest-derived melanocytes, mast cells, osteoclasts and optic cup-derived retinal pigment epithelium. The polypeptide is Microphthalmia-associated transcription factor (Homo sapiens (Human)).